We begin with the raw amino-acid sequence, 111 residues long: Nucleoid-associated protein glr3498 (111 aa).

Belongs to the YbaB/EbfC family. In terms of assembly, homodimer.

The protein localises to the cytoplasm. Its subcellular location is the nucleoid. Functionally, binds to DNA and alters its conformation. May be involved in regulation of gene expression, nucleoid organization and DNA protection. This chain is Nucleoid-associated protein glr3498, found in Gloeobacter violaceus (strain ATCC 29082 / PCC 7421).